The primary structure comprises 400 residues: Diphosphomevalonate decarboxylase (400 aa).

Alanine 2 bears the N-acetylalanine mark. Residues 23 to 26 (YWGK), arginine 78, 156 to 161 (SGSACR), and threonine 212 each bind (R)-5-diphosphomevalonate.

The protein belongs to the diphosphomevalonate decarboxylase family. As to quaternary structure, homodimer.

It is found in the cytoplasm. The catalysed reaction is (R)-5-diphosphomevalonate + ATP = isopentenyl diphosphate + ADP + phosphate + CO2. Its pathway is steroid biosynthesis; cholesterol biosynthesis. In terms of biological role, catalyzes the ATP dependent decarboxylation of (R)-5-diphosphomevalonate to form isopentenyl diphosphate (IPP). Functions in the mevalonate (MVA) pathway leading to isopentenyl diphosphate (IPP), a key precursor for the biosynthesis of isoprenoids and sterol synthesis. This Bos taurus (Bovine) protein is Diphosphomevalonate decarboxylase (MVD).